Here is a 314-residue protein sequence, read N- to C-terminus: Leucotoxin LukE (314 aa).

The first 28 residues, 1-28 (MFKKKMLAASLSVGLIAPLASPIQESRA), serve as a signal peptide directing secretion.

It belongs to the aerolysin family. Toxicity requires sequential binding and synergistic association of a class S and a class F component which form heterooligomeric complexes. LukE (class S) associates with LukD (class F). LukE can also associate with HlgB.

It is found in the secreted. Its function is as follows. Part of a bi-component leucotoxin that acts by forming pores in the membrane of the target cells. LukE-LukD is as effective as the Panton-Valentine leucocidin (PVL) for inducing dermonecrosis when injected in the rabbit skin, but not hemolytic and poorly leucotoxic on human blood cells compared to other leucotoxins expressed by S.aureus. In Staphylococcus aureus, this protein is Leucotoxin LukE (lukE).